The sequence spans 292 residues: Alpha-soluble NSF attachment protein (292 aa).

At Ser2 the chain carries N-acetylserine. Lys261 is covalently cross-linked (Glycyl lysine isopeptide (Lys-Gly) (interchain with G-Cter in ubiquitin)).

Belongs to the SNAP family. In terms of assembly, binds to vacuolar cis-SNARE complexes composed of the v-SNAREs NYV1, VTI1 and YKT6, and the t-SNAREs VAM3 and VAM7. Interacts with SEC18.

Its subcellular location is the membrane. In terms of biological role, SNARE complex protein that binds to cis-SNARE complexes on membranes and is required for vesicular transport between the endoplasmic reticulum and the Golgi apparatus and for homotypic vacuole fusion. During the priming step of membrane fusion, is released from cis-SNARE complexes by SEC18 to establish a pool of unpaired SNAREs, which are required for interactions in trans during docking and fusion steps. Can displace HOPS from SNARE complexes, which may be a prerequisite for trans-SNARE complex disassembly and subsequent rounds of priming, docking and fusion. The protein is Alpha-soluble NSF attachment protein (SEC17) of Saccharomyces cerevisiae (strain ATCC 204508 / S288c) (Baker's yeast).